Consider the following 862-residue polypeptide: MRMCTPIRGLLMALAVMFGTAMAFAPIPRITWEHREVHLVQFHEPDIYNYSALLLSEDKDTLYIGAREAVFAVNALNISEKQHEVYWKVSEDKKAKCAEKGKSKQTECLNYIRVLQPLSATSLYVCGTNAFQPACDHLNLTSFKFLGKNEDGKGRCPFDPAHSYTSVMVDGELYSGTSYNFLGSEPIISRNSSHSPLRTEYAIPWLNEPSFVFADVIRKSPDSPDGEDDRVYFFFTEVSVEYEFVFRVLIPRIARVCKGDQGGLRTLQKKWTSFLKARLICSRPDSGLVFNVLRDVFVLRSPGLKVPVFYALFTPQLNNVGLSAVCAYNLSTAEEVFSHGKYMQSTTVEQSHTKWVRYNGPVPKPRPGACIDSEARAANYTSSLNLPDKTLQFVKDHPLMDDSVTPIDNRPRLIKKDVNYTQIVVDRTQALDGTVYDVMFVSTDRGALHKAISLEHAVHIIEETQLFQDFEPVQTLLLSSKKGNRFVYAGSNSGVVQAPLAFCGKHGTCEDCVLARDPYCAWSPPTATCVALHQTESPSRGLIQEMSGDASVCPDKSKGSYRQHFFKHGGTAELKCSQKSNLARVFWKFQNGVLKAESPKYGLMGRKNLLIFNLSEGDSGVYQCLSEERVKNKTVFQVVAKHVLEVKVVPKPVVAPTLSVVQTEGSRIATKVLVASTQGSSPPTPAVQATSSGAITLPPKPAPTGTSCEPKIVINTVPQLHSEKTMYLKSSDNRLLMSLFLFFFVLFLCLFFYNCYKGYLPRQCLKFRSALLIGKKKPKSDFCDREQSLKETLVEPGSFSQQNGEHPKPALDTGYETEQDTITSKVPTDREDSQRIDDLSARDKPFDVKCELKFADSDADGD.

The signal sequence occupies residues 1–21 (MRMCTPIRGLLMALAVMFGTA). Residues 22 to 500 (MAFAPIPRIT…SNSGVVQAPL (479 aa)) enclose the Sema domain. Topologically, residues 22–734 (MAFAPIPRIT…TMYLKSSDNR (713 aa)) are extracellular. Residues Asn-49 and Asn-77 are each glycosylated (N-linked (GlcNAc...) asparagine). Intrachain disulfides connect Cys-97–Cys-108 and Cys-126–Cys-135. 2 N-linked (GlcNAc...) asparagine glycosylation sites follow: Asn-139 and Asn-191. Disulfide bonds link Cys-257–Cys-370 and Cys-281–Cys-326. Asn-329, Asn-379, and Asn-419 each carry an N-linked (GlcNAc...) asparagine glycan. The PSI domain occupies 502 to 551 (FCGKHGTCEDCVLARDPYCAWSPPTATCVALHQTESPSRGLIQEMSGDAS). Disulfide bonds link Cys-503-Cys-520, Cys-509-Cys-553, Cys-512-Cys-529, and Cys-576-Cys-624. The region spanning 554-636 (PDKSKGSYRQ…EERVKNKTVF (83 aa)) is the Ig-like C2-type domain. Residues Asn-613 and Asn-632 are each glycosylated (N-linked (GlcNAc...) asparagine). The helical transmembrane segment at 735 to 755 (LLMSLFLFFFVLFLCLFFYNC) threads the bilayer. The Cytoplasmic portion of the chain corresponds to 756 to 862 (YKGYLPRQCL…KFADSDADGD (107 aa)). The interval 794–837 (VEPGSFSQQNGEHPKPALDTGYETEQDTITSKVPTDREDSQRID) is disordered. Positions 827 to 837 (PTDREDSQRID) are enriched in basic and acidic residues. At Ser-833 the chain carries Phosphoserine.

The protein belongs to the semaphorin family. In terms of assembly, homodimer. Interacts with PLXNB2. Interacts with PLXNB1. As to expression, strongly expressed in skeletal muscle, peripheral blood lymphocytes, spleen, and thymus and also expressed at lower levels in testes, brain, kidney, small intestine, prostate, heart, placenta, lung and pancreas, but not in colon and liver.

The protein resides in the cell membrane. Cell surface receptor for PLXNB1 and PLXNB2 that plays an important role in cell-cell signaling. Regulates GABAergic synapse development. Promotes the development of inhibitory synapses in a PLXNB1-dependent manner. Modulates the complexity and arborization of developing neurites in hippocampal neurons by activating PLXNB1 and interaction with PLXNB1 mediates activation of RHOA. Promotes the migration of cerebellar granule cells. Plays a role in the immune system; induces B-cells to aggregate and improves their viability (in vitro). Induces endothelial cell migration through the activation of PTK2B/PYK2, SRC, and the phosphatidylinositol 3-kinase-AKT pathway. In Homo sapiens (Human), this protein is Semaphorin-4D (SEMA4D).